The following is a 665-amino-acid chain: Auxin response factor 1 (665 aa).

Positions 124–226 form a DNA-binding region, TF-B3; that stretch reads FCKTLTASDT…ELRVGVRRHM (103 aa). Disordered regions lie at residues 356–408, 496–542, and 645–665; these read VANS…SVPL, PVPS…RQIR, and KADAEENGNTEGRSSSMAGSR. Composition is skewed to polar residues over residues 497 to 519, 530 to 542, and 651 to 665; these read VPSNEFDSGQQSEPLNINQSDIP, LRSPQESQSRQIR, and NGNTEGRSSSMAGSR. The PB1 domain maps to 542-635; that stretch reads RSCTKVHMQG…EVKKLSPKNK (94 aa).

This sequence belongs to the ARF family. In terms of assembly, homodimers and heterodimers. Interacts with the auxin-responsive proteins IAA12, IAA13, IAA17 and with ARF2. Binds to RIN13 in the nucleus. In terms of tissue distribution, expressed in the whole plant.

The protein resides in the nucleus. The protein localises to the cytoplasm. Auxin response factors (ARFs) are transcriptional factors that bind specifically to the DNA sequence 5'-TGTCTC-3' found in the auxin-responsive promoter elements (AuxREs). Seems to act as transcriptional repressor. Formation of heterodimers with Aux/IAA proteins may alter their ability to modulate early auxin response genes expression. Promotes flowering, stamen development, floral organ abscission and fruit dehiscence. Acts as a repressor of IAA2, IAA3 and IAA7. Together with RIN13, promotes leaf senescence and cell death. This is Auxin response factor 1 from Arabidopsis thaliana (Mouse-ear cress).